Consider the following 149-residue polypeptide: Large ribosomal subunit protein bL9 (149 aa).

The protein belongs to the bacterial ribosomal protein bL9 family.

In terms of biological role, binds to the 23S rRNA. This is Large ribosomal subunit protein bL9 from Synechococcus sp. (strain JA-2-3B'a(2-13)) (Cyanobacteria bacterium Yellowstone B-Prime).